The primary structure comprises 88 residues: MIASSVKAEVIKDNARAANDTGSPEVQVALLTARINELTPHFKQHAKDHHGRRGLLRMVSRRRKLLDYLKAKDADRYTALIAKLGLRK.

The protein belongs to the universal ribosomal protein uS15 family. In terms of assembly, part of the 30S ribosomal subunit. Forms a bridge to the 50S subunit in the 70S ribosome, contacting the 23S rRNA.

One of the primary rRNA binding proteins, it binds directly to 16S rRNA where it helps nucleate assembly of the platform of the 30S subunit by binding and bridging several RNA helices of the 16S rRNA. Functionally, forms an intersubunit bridge (bridge B4) with the 23S rRNA of the 50S subunit in the ribosome. The sequence is that of Small ribosomal subunit protein uS15 from Paracidovorax citrulli (strain AAC00-1) (Acidovorax citrulli).